Reading from the N-terminus, the 481-residue chain is UDP-N-acetylmuramoyl-L-alanyl-D-glutamate--L-lysine ligase (481 aa).

UDP-N-acetyl-alpha-D-muramoyl-L-alanyl-D-glutamate is bound at residue Ser-42. An ATP-binding site is contributed by 118–124; it reads GTKGKTT. Residues 160-161, Ser-187, and Arg-195 each bind UDP-N-acetyl-alpha-D-muramoyl-L-alanyl-D-glutamate; that span reads TT. Lys-229 bears the N6-carboxylysine mark. Positions 404 to 407 match the L-lysine recognition motif motif; the sequence is DDPN.

Belongs to the MurCDEF family. MurE subfamily. Post-translationally, carboxylation is probably crucial for Mg(2+) binding and, consequently, for the gamma-phosphate positioning of ATP.

Its subcellular location is the cytoplasm. It catalyses the reaction UDP-N-acetyl-alpha-D-muramoyl-L-alanyl-D-glutamate + L-lysine + ATP = UDP-N-acetyl-alpha-D-muramoyl-L-alanyl-gamma-D-glutamyl-L-lysine + ADP + phosphate + H(+). Its pathway is cell wall biogenesis; peptidoglycan biosynthesis. In terms of biological role, catalyzes the addition of L-lysine to the nucleotide precursor UDP-N-acetylmuramoyl-L-alanyl-D-glutamate (UMAG) in the biosynthesis of bacterial cell-wall peptidoglycan. This Streptococcus pneumoniae (strain ATCC BAA-255 / R6) protein is UDP-N-acetylmuramoyl-L-alanyl-D-glutamate--L-lysine ligase.